The sequence spans 319 residues: ATP-dependent 6-phosphofructokinase (319 aa).

Residue Gly-11 participates in ATP binding. 21-25 (RAVVR) lines the ADP pocket. Residues 72–73 (RC) and 102–105 (GNGS) contribute to the ATP site. Asn-103 lines the Mg(2+) pocket. Substrate is bound at residue 125-127 (TID). Asp-127 (proton acceptor) is an active-site residue. Arg-154 contributes to the ADP binding site. Residues Arg-162 and 169–171 (MGR) each bind substrate. ADP-binding positions include 185 to 187 (GAE), Arg-211, and 213 to 215 (KMH). Residues Glu-222, Arg-243, and 249-252 (HIQR) each bind substrate.

Belongs to the phosphofructokinase type A (PFKA) family. ATP-dependent PFK group I subfamily. Prokaryotic clade 'B1' sub-subfamily. As to quaternary structure, homotetramer. Mg(2+) serves as cofactor.

The protein localises to the cytoplasm. It carries out the reaction beta-D-fructose 6-phosphate + ATP = beta-D-fructose 1,6-bisphosphate + ADP + H(+). It functions in the pathway carbohydrate degradation; glycolysis; D-glyceraldehyde 3-phosphate and glycerone phosphate from D-glucose: step 3/4. Its activity is regulated as follows. Allosterically activated by ADP and other diphosphonucleosides, and allosterically inhibited by phosphoenolpyruvate. Catalyzes the phosphorylation of D-fructose 6-phosphate to fructose 1,6-bisphosphate by ATP, the first committing step of glycolysis. This is ATP-dependent 6-phosphofructokinase from Clostridium acetobutylicum (strain ATCC 824 / DSM 792 / JCM 1419 / IAM 19013 / LMG 5710 / NBRC 13948 / NRRL B-527 / VKM B-1787 / 2291 / W).